The following is a 474-amino-acid chain: tRNA-2-methylthio-N(6)-dimethylallyladenosine synthase (474 aa).

An MTTase N-terminal domain is found at 3–120 (KKLHIKTWGC…LPEMINSVRG (118 aa)). C12, C49, C83, C157, C161, and C164 together coordinate [4Fe-4S] cluster. In terms of domain architecture, Radical SAM core spans 143–375 (RAEGPTAFVS…QERINQQAMA (233 aa)). The 64-residue stretch at 378–441 (RRMLGTTQRI…PNSLRGKVVR (64 aa)) folds into the TRAM domain.

The protein belongs to the methylthiotransferase family. MiaB subfamily. In terms of assembly, monomer. The cofactor is [4Fe-4S] cluster.

The protein localises to the cytoplasm. It catalyses the reaction N(6)-dimethylallyladenosine(37) in tRNA + (sulfur carrier)-SH + AH2 + 2 S-adenosyl-L-methionine = 2-methylsulfanyl-N(6)-dimethylallyladenosine(37) in tRNA + (sulfur carrier)-H + 5'-deoxyadenosine + L-methionine + A + S-adenosyl-L-homocysteine + 2 H(+). In terms of biological role, catalyzes the methylthiolation of N6-(dimethylallyl)adenosine (i(6)A), leading to the formation of 2-methylthio-N6-(dimethylallyl)adenosine (ms(2)i(6)A) at position 37 in tRNAs that read codons beginning with uridine. The sequence is that of tRNA-2-methylthio-N(6)-dimethylallyladenosine synthase from Shigella boydii serotype 4 (strain Sb227).